An 891-amino-acid chain; its full sequence is MAVARSSRTDAARPRTGAEIRDAFLAFFEERGHKRMPSASLVPEDPTVLLTIAGMLPFKPIFLGQQERPAPCATSSQKCIRTNDIENVGRTARHHTFFEMLGNFSFGDYFKQQAIEWAWELSTGVFGLDPKNLVVSVFRDDDEAEQIWREVVGVNPKRIIRMDEEDNFWASGPTGPCGPCSEIYYDFKPELGDDGIDLEDDDRFIEFYNLVFMQSNRDAEGTLTPLANRNIDTGMGLERMAQILQKVPNNYETDLIFPLIQAAAERAGVDYHQLDEKGKTSLKVIGDHSRAVTQLISDGVTASNLGRGYILRRLLRRVVRHGRLLGIDKPFLQAMGEASIALMQSAHPQLSERREVILAELQREEARFLETLERGEKLLADVLAAKPKQISGEQAFELYDTYGFPLELTQEIAEEHGLAVDLAGFETAMEQQRQRAKAAAVSIDLTLQDAIDQVAAGLQDTEFRGYEQLEQSSSIQALVVNGEPAQSAVAGDAVQVVLDVTPFYGEGGGQIGDRGTLVADGQAGDGLIVMVESVSRNRSVFVHSGRVQRGALAVGDVVHGRVDRACRRRAQANHTATHLLQAALKQEVDPGIGQAGSLVSFDRLRFDFHCPRAVTAEELERIESLINGWIADAHALEVQEMAIEKAKAAGAVAMFGEKYADVVRVVDVPGVSMELCGGTHVANTAEIGLFKIVSESGVAAGIRRIEAVAGAAVLPYLNERDAVVKQLGERFKAQPGEIIERVTALQDELKATGKALAAAQAELAVAKSAALATKAVAVGDFQLLVERLDGVDGTGLQGAAQSLADQLGDGAAVVLGGLPDPADQGKVILVAAFGKAVIAQGQQAGKFIGGIAKLCGGGGGGRPNLAQAGGRDGAALASALEAASHQLRESL.

Zn(2+)-binding residues include H574, H578, C676, and H680.

This sequence belongs to the class-II aminoacyl-tRNA synthetase family. Requires Zn(2+) as cofactor.

It is found in the cytoplasm. It catalyses the reaction tRNA(Ala) + L-alanine + ATP = L-alanyl-tRNA(Ala) + AMP + diphosphate. Catalyzes the attachment of alanine to tRNA(Ala) in a two-step reaction: alanine is first activated by ATP to form Ala-AMP and then transferred to the acceptor end of tRNA(Ala). Also edits incorrectly charged Ser-tRNA(Ala) and Gly-tRNA(Ala) via its editing domain. The protein is Alanine--tRNA ligase of Synechococcus sp. (strain WH7803).